Here is a 1118-residue protein sequence, read N- to C-terminus: Pleckstrin homology domain-containing family A member 7 (1118 aa).

2 WW domains span residues 8 to 41 (DTLPEHWSYGVCRDGRVFFINDQLRCTTWLHPRT) and 53 to 86 (SDLPRGWEEGFTEEGASFFIDHNQQTTTFRHPVT). Over residues 100–113 (EEPHPHMSKPERNQ) the composition is skewed to basic and acidic residues. The disordered stretch occupies residues 100-145 (EEPHPHMSKPERNQRPSSMVSETSTAGTTSTLEAKPGPKIVKSSSK). Over residues 114 to 131 (RPSSMVSETSTAGTTSTL) the composition is skewed to polar residues. Residues 163–281 (PVVVRGWLHK…WVRAMNQAAQ (119 aa)) enclose the PH domain. Composition is skewed to basic and acidic residues over residues 334–355 (FNRREQEEERFRAQRDPLEGRR) and 434–443 (HWTKAQKGDG). 2 disordered regions span residues 334–512 (FNRR…RRAH) and 528–629 (QFRH…RRSM). The span at 452 to 481 (LPRQGPSQPLSFPENYQSLPKSTRHLSGSS) shows a compositional bias: polar residues. The span at 494–512 (YAQDRASHLKMSSEERRAH) shows a compositional bias: basic and acidic residues. Ser-533, Ser-542, Ser-566, Ser-601, Ser-605, and Ser-609 each carry phosphoserine. The tract at residues 535-693 (TAPIGAGSPE…AESDIDVKLS (159 aa)) is interaction with CTNND1. The span at 564–579 (PPSPSDIPPPGPPRPF) shows a compositional bias: pro residues. Basic and acidic residues predominate over residues 586 to 602 (TPAERVTVKPPEQRRSV). Residues 697–798 (EQDRILQDLE…LQEQHRRAFF (102 aa)) are a coiled coil. 2 disordered regions span residues 839–873 (KTVPLFPHPSVPSLSPTESKPALQPSPPTSPVRTP) and 886–968 (VPYR…EQGQ). Residues Ser-857 and Ser-864 each carry the phosphoserine modification. Position 867 is a phosphothreonine (Thr-867). Residues Ser-868, Ser-900, and Ser-904 each carry the phosphoserine modification. A compositionally biased stretch (pro residues) spans 930 to 939 (DQPPAVPPLP). Positions 955–966 (RQSDERKRDREQ) are enriched in basic and acidic residues. Residues Ser-983 and Leu-990 each carry the phosphoserine modification. The disordered stretch occupies residues 1003–1024 (GSESRYQTLPGRGLSGSTSRLQ). Residues 1064–1091 (QRGKMSAEEQLERMKRHQKALVRERKRT) adopt a coiled-coil conformation.

In terms of assembly, interacts with CAMSAP3 and CTNND1. Interacts (via WW domains) with TSPAN33 (via cytoplasmic domain) and with PDZD11; the interaction with TSPAN33 is dependent on PDZD11 being bound to PLEKHA7 and facilitates the docking of ADAM10 to zonula adherens through interaction of TSPAN33 with ADAM10. As to expression, expressed in kidney and lung (at protein level).

It is found in the cell junction. It localises to the adherens junction. The protein resides in the cytoplasm. The protein localises to the cytoskeleton. Its subcellular location is the microtubule organizing center. It is found in the centrosome. Required for zonula adherens biogenesis and maintenance. Acts via its interaction with CAMSAP3, which anchors microtubules at their minus-ends to zonula adherens, leading to the recruitment of KIFC3 kinesin to the junctional site. Mediates docking of ADAM10 to zonula adherens through a PDZD11-dependent interaction with the ADAM10-binding protein TSPAN33. The polypeptide is Pleckstrin homology domain-containing family A member 7 (Plekha7) (Mus musculus (Mouse)).